Reading from the N-terminus, the 588-residue chain is Methylcrotonoyl-CoA carboxylase beta chain, mitochondrial (588 aa).

The CoA carboxyltransferase N-terminal domain maps to M72–E329. The segment at M72–A570 is carboxyltransferase. The region spanning E329 to A570 is the CoA carboxyltransferase C-terminal domain. Residues R366–N395 are acyl-CoA binding.

The protein belongs to the AccD/PCCB family. As to quaternary structure, probably a dodecamer composed of six biotin-containing alpha subunits and six beta subunits.

The protein localises to the mitochondrion matrix. It carries out the reaction 3-methylbut-2-enoyl-CoA + hydrogencarbonate + ATP = 3-methyl-(2E)-glutaconyl-CoA + ADP + phosphate + H(+). The protein operates within amino-acid degradation; L-leucine degradation; (S)-3-hydroxy-3-methylglutaryl-CoA from 3-isovaleryl-CoA: step 2/3. Functionally, carboxyltransferase subunit of the 3-methylcrotonyl-CoA carboxylase, an enzyme that catalyzes the conversion of 3-methylcrotonyl-CoA to 3-methylglutaconyl-CoA, a critical step for leucine and isovaleric acid catabolism. The chain is Methylcrotonoyl-CoA carboxylase beta chain, mitochondrial (mccb) from Dictyostelium discoideum (Social amoeba).